Reading from the N-terminus, the 108-residue chain is Large ribosomal subunit protein eL30 (108 aa).

Belongs to the eukaryotic ribosomal protein eL30 family.

The polypeptide is Large ribosomal subunit protein eL30 (rpl30e) (Saccharolobus solfataricus (strain ATCC 35092 / DSM 1617 / JCM 11322 / P2) (Sulfolobus solfataricus)).